A 328-amino-acid chain; its full sequence is Putative lipase LIH1 (328 aa).

The Nucleophile role is filled by S181. Active-site charge relay system residues include D253 and H315.

It belongs to the AB hydrolase superfamily. Lipase family.

It catalyses the reaction a triacylglycerol + H2O = a diacylglycerol + a fatty acid + H(+). Its function is as follows. Lipases catalyze the hydrolysis of the ester bond of tri-, di- and monoglycerides of long-chain fatty acids into fatty acids and glycerol. In Saccharomyces cerevisiae (strain ATCC 204508 / S288c) (Baker's yeast), this protein is Putative lipase LIH1.